A 91-amino-acid chain; its full sequence is Probable Fe(2+)-trafficking protein (91 aa).

The protein belongs to the Fe(2+)-trafficking protein family.

Could be a mediator in iron transactions between iron acquisition and iron-requiring processes, such as synthesis and/or repair of Fe-S clusters in biosynthetic enzymes. In Shewanella amazonensis (strain ATCC BAA-1098 / SB2B), this protein is Probable Fe(2+)-trafficking protein.